A 329-amino-acid polypeptide reads, in one-letter code: Phosphate acyltransferase (329 aa).

The protein belongs to the PlsX family. As to quaternary structure, homodimer. Probably interacts with PlsY.

The protein localises to the cytoplasm. The catalysed reaction is a fatty acyl-[ACP] + phosphate = an acyl phosphate + holo-[ACP]. It functions in the pathway lipid metabolism; phospholipid metabolism. Its function is as follows. Catalyzes the reversible formation of acyl-phosphate (acyl-PO(4)) from acyl-[acyl-carrier-protein] (acyl-ACP). This enzyme utilizes acyl-ACP as fatty acyl donor, but not acyl-CoA. The polypeptide is Phosphate acyltransferase (Campylobacter lari (strain RM2100 / D67 / ATCC BAA-1060)).